The chain runs to 346 residues: Probable dual-specificity RNA methyltransferase RlmN (346 aa).

Catalysis depends on Glu-92, which acts as the Proton acceptor. The Radical SAM core domain occupies 98–332; sequence TDQRLTVCVS…VSLRASRGLD (235 aa). The cysteines at positions 105 and 337 are disulfide-linked. Residues Cys-112, Cys-116, and Cys-119 each coordinate [4Fe-4S] cluster. S-adenosyl-L-methionine is bound by residues 159–160, Ser-189, 218–220, and Asn-294; these read GE and SLH. Cys-337 (S-methylcysteine intermediate) is an active-site residue.

It belongs to the radical SAM superfamily. RlmN family. It depends on [4Fe-4S] cluster as a cofactor.

Its subcellular location is the cytoplasm. The enzyme catalyses adenosine(2503) in 23S rRNA + 2 reduced [2Fe-2S]-[ferredoxin] + 2 S-adenosyl-L-methionine = 2-methyladenosine(2503) in 23S rRNA + 5'-deoxyadenosine + L-methionine + 2 oxidized [2Fe-2S]-[ferredoxin] + S-adenosyl-L-homocysteine. It catalyses the reaction adenosine(37) in tRNA + 2 reduced [2Fe-2S]-[ferredoxin] + 2 S-adenosyl-L-methionine = 2-methyladenosine(37) in tRNA + 5'-deoxyadenosine + L-methionine + 2 oxidized [2Fe-2S]-[ferredoxin] + S-adenosyl-L-homocysteine. In terms of biological role, specifically methylates position 2 of adenine 2503 in 23S rRNA and position 2 of adenine 37 in tRNAs. The sequence is that of Probable dual-specificity RNA methyltransferase RlmN from Synechococcus sp. (strain CC9311).